The following is a 469-amino-acid chain: Uronate isomerase (469 aa).

It belongs to the metallo-dependent hydrolases superfamily. Uronate isomerase family.

It catalyses the reaction D-glucuronate = D-fructuronate. The enzyme catalyses aldehydo-D-galacturonate = keto-D-tagaturonate. The protein operates within carbohydrate metabolism; pentose and glucuronate interconversion. This Corynebacterium efficiens (strain DSM 44549 / YS-314 / AJ 12310 / JCM 11189 / NBRC 100395) protein is Uronate isomerase.